The chain runs to 121 residues: Large ribosomal subunit protein bL12 (121 aa).

This sequence belongs to the bacterial ribosomal protein bL12 family. As to quaternary structure, homodimer. Part of the ribosomal stalk of the 50S ribosomal subunit. Forms a multimeric L10(L12)X complex, where L10 forms an elongated spine to which 2 to 4 L12 dimers bind in a sequential fashion. Binds GTP-bound translation factors.

Functionally, forms part of the ribosomal stalk which helps the ribosome interact with GTP-bound translation factors. Is thus essential for accurate translation. This chain is Large ribosomal subunit protein bL12, found in Streptococcus equi subsp. equi (strain 4047).